The sequence spans 426 residues: Glutamate-1-semialdehyde 2,1-aminomutase (426 aa).

An N6-(pyridoxal phosphate)lysine modification is found at Lys-265.

The protein belongs to the class-III pyridoxal-phosphate-dependent aminotransferase family. HemL subfamily. As to quaternary structure, homodimer. The cofactor is pyridoxal 5'-phosphate.

The protein resides in the cytoplasm. The catalysed reaction is (S)-4-amino-5-oxopentanoate = 5-aminolevulinate. It participates in porphyrin-containing compound metabolism; protoporphyrin-IX biosynthesis; 5-aminolevulinate from L-glutamyl-tRNA(Glu): step 2/2. The sequence is that of Glutamate-1-semialdehyde 2,1-aminomutase from Salmonella schwarzengrund (strain CVM19633).